A 397-amino-acid polypeptide reads, in one-letter code: Carbamoyl phosphate synthase small chain (397 aa).

Residues 1 to 204 (MKHVLRKEKT…NAKLKEKIWH (204 aa)) form a CPSase region. Positions 57, 252, and 254 each coordinate L-glutamine. A Glutamine amidotransferase type-1 domain is found at 204-391 (HVVVYDFGVK…IKLMKKSYNS (188 aa)). Cys-280 functions as the Nucleophile in the catalytic mechanism. Positions 281, 284, 322, and 325 each coordinate L-glutamine. Catalysis depends on residues His-364 and Glu-366.

The protein belongs to the CarA family. In terms of assembly, composed of two chains; the small (or glutamine) chain promotes the hydrolysis of glutamine to ammonia, which is used by the large (or ammonia) chain to synthesize carbamoyl phosphate. Tetramer of heterodimers (alpha,beta)4.

It carries out the reaction hydrogencarbonate + L-glutamine + 2 ATP + H2O = carbamoyl phosphate + L-glutamate + 2 ADP + phosphate + 2 H(+). The catalysed reaction is L-glutamine + H2O = L-glutamate + NH4(+). It functions in the pathway amino-acid biosynthesis; L-arginine biosynthesis; carbamoyl phosphate from bicarbonate: step 1/1. The protein operates within pyrimidine metabolism; UMP biosynthesis via de novo pathway; (S)-dihydroorotate from bicarbonate: step 1/3. Small subunit of the glutamine-dependent carbamoyl phosphate synthetase (CPSase). CPSase catalyzes the formation of carbamoyl phosphate from the ammonia moiety of glutamine, carbonate, and phosphate donated by ATP, constituting the first step of 2 biosynthetic pathways, one leading to arginine and/or urea and the other to pyrimidine nucleotides. The small subunit (glutamine amidotransferase) binds and cleaves glutamine to supply the large subunit with the substrate ammonia. In Buchnera aphidicola subsp. Baizongia pistaciae (strain Bp), this protein is Carbamoyl phosphate synthase small chain.